A 524-amino-acid polypeptide reads, in one-letter code: D-3-phosphoglycerate dehydrogenase (524 aa).

Residues R149–I150, D169, C229–R231, and D255 contribute to the NAD(+) site. R231 is an active-site residue. E260 is a catalytic residue. Residue H278 is the Proton donor of the active site. Residue H278 to A281 participates in NAD(+) binding. The region spanning L452 to L524 is the ACT domain.

This sequence belongs to the D-isomer specific 2-hydroxyacid dehydrogenase family.

The enzyme catalyses (2R)-3-phosphoglycerate + NAD(+) = 3-phosphooxypyruvate + NADH + H(+). It participates in amino-acid biosynthesis; L-serine biosynthesis; L-serine from 3-phospho-D-glycerate: step 1/3. This is D-3-phosphoglycerate dehydrogenase (serA) from Methanocaldococcus jannaschii (strain ATCC 43067 / DSM 2661 / JAL-1 / JCM 10045 / NBRC 100440) (Methanococcus jannaschii).